Reading from the N-terminus, the 93-residue chain is Molybdopterin synthase sulfur carrier subunit (93 aa).

Glycine 93 carries the 1-thioglycine; alternate modification. Glycine 93 carries the post-translational modification Glycyl adenylate; alternate.

It belongs to the MoaD family. MOCS2A subfamily. In terms of assembly, heterotetramer; composed of 2 small (MOCS2A) and 2 large (MOCS2B) subunits. In terms of processing, C-terminal thiocarboxylation occurs in 2 steps, it is first acyl-adenylated (-COAMP) via the hesA/moeB/thiF part of UBA4, then thiocarboxylated (-COSH) via the rhodanese domain of UBA4.

Its subcellular location is the cytoplasm. It functions in the pathway cofactor biosynthesis; molybdopterin biosynthesis. Acts as a sulfur carrier required for molybdopterin biosynthesis. Component of the molybdopterin synthase complex that catalyzes the conversion of precursor Z into molybdopterin by mediating the incorporation of 2 sulfur atoms into precursor Z to generate a dithiolene group. In the complex, serves as sulfur donor by being thiocarboxylated (-COSH) at its C-terminus by UBA4. After interaction with MOCS2B, the sulfur is then transferred to precursor Z to form molybdopterin. The sequence is that of Molybdopterin synthase sulfur carrier subunit from Mycosarcoma maydis (Corn smut fungus).